We begin with the raw amino-acid sequence, 1849 residues long: Protein TANC1 (1849 aa).

Position 1 is an N-acetylmethionine (Met1). 2 disordered regions span residues 1–47 (MLKA…TTED) and 59–109 (MSLP…FREG). Residues 8–21 (KSREGVKGSKKEAG) show a composition bias toward basic and acidic residues. Polar residues predominate over residues 27–46 (ETPTLSSSGDSPVNSLSTTE). Residues Ser60, Ser63, Ser64, Ser204, Ser267, and Ser455 each carry the phosphoserine modification. Disordered stretches follow at residues 264 to 309 (DNCS…PRPN) and 430 to 481 (VASS…QRPR). Residues 451–468 (TPLLSPSSSTSALSAART) are compositionally biased toward low complexity. 11 ANK repeats span residues 886-918 (EGLS…NVNY), 924-953 (NNAP…CLDG), 957-986 (NGMN…RVDH), 990-1019 (KGQC…SAGP), 1030-1059 (ALQQ…EHEI), 1068-1097 (WGET…AVSR), 1101-1130 (RGVP…DVNP), 1134-1163 (QGRT…ALSS), 1167-1196 (EGLS…EIDQ), 1200-1229 (NGRT…VIEH), and 1233-1262 (SGMR…KLGN). TPR repeat units follow at residues 1279 to 1312 (LQKL…FPRE), 1326 to 1359 (VSLY…KPKS), and 1361 to 1393 (EAFY…CPTN). The segment covering 1410–1421 (LQRNQQQKQQAP) has biased composition (low complexity). Disordered stretches follow at residues 1410–1503 (LQRN…ISKS), 1527–1605 (NQHL…GESG), 1635–1711 (QGGP…PRNT), and 1812–1849 (PHLY…ESNV). Ser1429 and Ser1456 each carry phosphoserine. The segment covering 1447 to 1456 (EEAEEEDTSS) has biased composition (acidic residues). Polar residues-rich tracts occupy residues 1527-1546 (NQHL…KVQV) and 1593-1603 (PSQSLQLQRGE). The span at 1649-1679 (SLSSSGSSGSPSSSVKMSSSTSSLTSSSSVS) shows a compositional bias: low complexity. Ser1658, Ser1666, and Ser1667 each carry phosphoserine.

This sequence belongs to the TANC family. As to quaternary structure, interacts probably directly with DLG1, DLG4, HOMER1. Interacts with DLGAP1, INA, CAMK2A, GRIN2B and GRIA1. Interacts with TNIK and MINK1. Phosphorylated; by MINK1 and TNIK upon stimulation by RAP2A. As to expression, expressed in heart, lung, liver and kidney. Expressed in brain (at protein level).

The protein localises to the postsynaptic density. Its function is as follows. May be a scaffold component in the postsynaptic density. This is Protein TANC1 (Tanc1) from Rattus norvegicus (Rat).